A 134-amino-acid polypeptide reads, in one-letter code: Phosphoribosyl-ATP pyrophosphatase (134 aa).

It belongs to the PRA-PH family.

Its subcellular location is the cytoplasm. The enzyme catalyses 1-(5-phospho-beta-D-ribosyl)-ATP + H2O = 1-(5-phospho-beta-D-ribosyl)-5'-AMP + diphosphate + H(+). It participates in amino-acid biosynthesis; L-histidine biosynthesis; L-histidine from 5-phospho-alpha-D-ribose 1-diphosphate: step 2/9. In Verminephrobacter eiseniae (strain EF01-2), this protein is Phosphoribosyl-ATP pyrophosphatase.